A 349-amino-acid chain; its full sequence is Small ribosomal subunit biogenesis GTPase RsgA (349 aa).

The segment covering 1–11 has biased composition (basic residues); that stretch reads MSKKKLSKGQQ. The interval 1–29 is disordered; sequence MSKKKLSKGQQRRVSANHQRRLKKTESKV. One can recognise a CP-type G domain in the interval 102–272; it reads HSVLTRPDYY…VIDSPGVREF (171 aa). Residues 158-161 and 212-220 each bind GTP; these read NKID and GQSGVGKSS. Zn(2+) contacts are provided by C296, C301, H303, and C309.

The protein belongs to the TRAFAC class YlqF/YawG GTPase family. RsgA subfamily. Monomer. Associates with 30S ribosomal subunit, binds 16S rRNA. Zn(2+) serves as cofactor.

It is found in the cytoplasm. Functionally, one of several proteins that assist in the late maturation steps of the functional core of the 30S ribosomal subunit. Helps release RbfA from mature subunits. May play a role in the assembly of ribosomal proteins into the subunit. Circularly permuted GTPase that catalyzes slow GTP hydrolysis, GTPase activity is stimulated by the 30S ribosomal subunit. This is Small ribosomal subunit biogenesis GTPase RsgA from Pectobacterium carotovorum subsp. carotovorum (strain PC1).